The chain runs to 476 residues: Aspartyl/glutamyl-tRNA(Asn/Gln) amidotransferase subunit B (476 aa).

This sequence belongs to the GatB/GatE family. GatB subfamily. As to quaternary structure, heterotrimer of A, B and C subunits.

The enzyme catalyses L-glutamyl-tRNA(Gln) + L-glutamine + ATP + H2O = L-glutaminyl-tRNA(Gln) + L-glutamate + ADP + phosphate + H(+). It catalyses the reaction L-aspartyl-tRNA(Asn) + L-glutamine + ATP + H2O = L-asparaginyl-tRNA(Asn) + L-glutamate + ADP + phosphate + 2 H(+). Functionally, allows the formation of correctly charged Asn-tRNA(Asn) or Gln-tRNA(Gln) through the transamidation of misacylated Asp-tRNA(Asn) or Glu-tRNA(Gln) in organisms which lack either or both of asparaginyl-tRNA or glutaminyl-tRNA synthetases. The reaction takes place in the presence of glutamine and ATP through an activated phospho-Asp-tRNA(Asn) or phospho-Glu-tRNA(Gln). In Clostridium botulinum (strain 657 / Type Ba4), this protein is Aspartyl/glutamyl-tRNA(Asn/Gln) amidotransferase subunit B.